Reading from the N-terminus, the 200-residue chain is ATP synthase subunit s, mitochondrial (200 aa).

The N-terminal 25 residues, 1–25 (MMLFGKISQQLCGVKKLPWSCDSRY), are a transit peptide targeting the mitochondrion. The N-terminal domain stretch occupies residues 1–61 (MMLFGKISQQ…SEWLLRCGAM (61 aa)). Gly-59 is a binding site for Mg(2+). LRR repeat units follow at residues 62-87 (VRYH…KYKI), 88-116 (QAID…KIRL), 117-141 (CKCH…KTIL), and 142-173 (EMEI…LSDL). Thr-93 is a binding site for Mg(2+).

It belongs to the ATP synthase subunit s family. Homotetramer. Associates with ATP synthase.

It is found in the mitochondrion. Its subcellular location is the mitochondrion inner membrane. Functionally, involved in regulation of mitochondrial membrane ATP synthase. Necessary for H(+) conduction of ATP synthase. Facilitates energy-driven catalysis of ATP synthesis by blocking a proton leak through an alternative proton exit pathway. The protein is ATP synthase subunit s, mitochondrial (DMAC2L) of Pongo abelii (Sumatran orangutan).